We begin with the raw amino-acid sequence, 119 residues long: Protein TusC (119 aa).

This sequence belongs to the DsrF/TusC family. In terms of assembly, heterohexamer, formed by a dimer of trimers. The hexameric TusBCD complex contains 2 copies each of TusB, TusC and TusD. The TusBCD complex interacts with TusE.

The protein resides in the cytoplasm. In terms of biological role, part of a sulfur-relay system required for 2-thiolation of 5-methylaminomethyl-2-thiouridine (mnm(5)s(2)U) at tRNA wobble positions. The sequence is that of Protein TusC from Cronobacter sakazakii (strain ATCC BAA-894) (Enterobacter sakazakii).